A 149-amino-acid polypeptide reads, in one-letter code: Large ribosomal subunit protein bL9 (149 aa).

Belongs to the bacterial ribosomal protein bL9 family.

Its function is as follows. Binds to the 23S rRNA. This Sulfurihydrogenibium sp. (strain YO3AOP1) protein is Large ribosomal subunit protein bL9.